Consider the following 209-residue polypeptide: Molybdenum cofactor guanylyltransferase (209 aa).

GTP is bound by residues L13–G15, K26, N54, D74, and D104. D104 is a binding site for Mg(2+).

Belongs to the MobA family. In terms of assembly, monomer. Mg(2+) is required as a cofactor.

It is found in the cytoplasm. It catalyses the reaction Mo-molybdopterin + GTP + H(+) = Mo-molybdopterin guanine dinucleotide + diphosphate. Functionally, transfers a GMP moiety from GTP to Mo-molybdopterin (Mo-MPT) cofactor (Moco or molybdenum cofactor) to form Mo-molybdopterin guanine dinucleotide (Mo-MGD) cofactor. The sequence is that of Molybdenum cofactor guanylyltransferase from Acinetobacter baumannii (strain ACICU).